The chain runs to 501 residues: Glycerol kinase (501 aa).

Thr12 is an ADP binding site. ATP-binding residues include Thr12, Thr13, and Ser14. Thr12 lines the sn-glycerol 3-phosphate pocket. Arg16 contacts ADP. 4 residues coordinate sn-glycerol 3-phosphate: Arg82, Glu83, Tyr134, and Asp244. Residues Arg82, Glu83, Tyr134, Asp244, and Gln245 each contribute to the glycerol site. Residues Thr266 and Gly310 each coordinate ADP. ATP-binding residues include Thr266, Gly310, Gln314, and Gly411. The ADP site is built by Gly411 and Asn415.

Belongs to the FGGY kinase family.

The catalysed reaction is glycerol + ATP = sn-glycerol 3-phosphate + ADP + H(+). It functions in the pathway polyol metabolism; glycerol degradation via glycerol kinase pathway; sn-glycerol 3-phosphate from glycerol: step 1/1. Its activity is regulated as follows. Inhibited by fructose 1,6-bisphosphate (FBP). Functionally, key enzyme in the regulation of glycerol uptake and metabolism. Catalyzes the phosphorylation of glycerol to yield sn-glycerol 3-phosphate. The polypeptide is Glycerol kinase (Methylorubrum populi (strain ATCC BAA-705 / NCIMB 13946 / BJ001) (Methylobacterium populi)).